The primary structure comprises 370 residues: Cytoplasmic envelopment protein 2 (370 aa).

The protein belongs to the herpesviridae cytoplasmic envelopment protein 2 family. Interacts with cytoplasmic envelopment protein 3 and with the capsid.

It is found in the virion tegument. It localises to the host cytoplasm. The protein localises to the host nucleus. Its function is as follows. Plays a critical role in cytoplasmic virus egress. Participates in the final step of tegumentation and envelope acquisition within the host cytoplasm by directly interacting with the capsid. Upon virion binding to target cell, a signaling cascade is triggered to disrupt the interaction with the capsid, thereby preparing capsid uncoating. In Equine herpesvirus 1 (strain V592) (EHV-1), this protein is Cytoplasmic envelopment protein 2.